Consider the following 211-residue polypeptide: Ribonuclease HII (211 aa).

Residues 1–205 (MRFGVDEAGK…CDDVLAAASQ (205 aa)) enclose the RNase H type-2 domain. Residues aspartate 6, glutamate 7, and aspartate 100 each coordinate a divalent metal cation.

It belongs to the RNase HII family. Requires Mn(2+) as cofactor. It depends on Mg(2+) as a cofactor.

It localises to the cytoplasm. It carries out the reaction Endonucleolytic cleavage to 5'-phosphomonoester.. Functionally, endonuclease that specifically degrades the RNA of RNA-DNA hybrids. This is Ribonuclease HII from Haloarcula marismortui (strain ATCC 43049 / DSM 3752 / JCM 8966 / VKM B-1809) (Halobacterium marismortui).